The following is a 398-amino-acid chain: Thyrotropin-releasing hormone receptor (398 aa).

Residues 1–28 are Extracellular-facing; it reads MENETGSELNQTQLQPRAVVALEYQVVT. 2 N-linked (GlcNAc...) asparagine glycosylation sites follow: asparagine 3 and asparagine 10. The helical transmembrane segment at 29–51 threads the bilayer; the sequence is ILLVLIICGLGIVGNIMVVLVVM. Residues 52–61 lie on the Cytoplasmic side of the membrane; sequence RTKHMRTPTN. The helical transmembrane segment at 62-83 threads the bilayer; the sequence is CYLVSLAVADLMVLVAAGLPNI. The Extracellular segment spans residues 84–99; that stretch reads TDSIYGSWVYGYVGCL. Cysteine 98 and cysteine 179 are disulfide-bonded. Residues 100–121 form a helical membrane-spanning segment; sequence CITYLQYLGINASSCSITAFTI. Over 122 to 144 the chain is Cytoplasmic; the sequence is ERYIAICHPIKAQFLCTFSRAKK. The chain crosses the membrane as a helical span at residues 145–168; sequence IIIFVWAFTSIYCMLWFFLLDLNI. Residues 169–193 are Extracellular-facing; the sequence is STYKDAIVVSCGYKISRNYYSPIYL. A helical membrane pass occupies residues 194–215; the sequence is MDFGVFYVVPMILATVLYGFIA. Over 216-266 the chain is Cytoplasmic; the sequence is RILFLSPIPSDPKENSNTWKNDSTHQNKNLNSKTSNRYFNSTVSSRKQVTK. Residues 267 to 288 form a helical membrane-spanning segment; it reads MLAVVVILFALLWMPYRTLVVV. The Extracellular segment spans residues 289–296; the sequence is NSFLSSPF. A helical membrane pass occupies residues 297 to 319; sequence QENWFLLFCRICIYLNSAINPVI. At 320-398 the chain is on the cytoplasmic side; sequence YNLMSQKFRA…LASEVTFSQS (79 aa).

Belongs to the G-protein coupled receptor 1 family.

The protein localises to the cell membrane. Functionally, receptor for thyrotropin-releasing hormone (TRH). Upon ligand binding, this G-protein-coupled receptor triggers activation of the phosphatidylinositol (IP3)-calcium-protein kinase C (PKC) pathway. This is Thyrotropin-releasing hormone receptor (TRHR) from Ovis aries (Sheep).